The sequence spans 360 residues: S-adenosylmethionine:tRNA ribosyltransferase-isomerase (360 aa).

This sequence belongs to the QueA family. As to quaternary structure, monomer.

Its subcellular location is the cytoplasm. The enzyme catalyses 7-aminomethyl-7-carbaguanosine(34) in tRNA + S-adenosyl-L-methionine = epoxyqueuosine(34) in tRNA + adenine + L-methionine + 2 H(+). The protein operates within tRNA modification; tRNA-queuosine biosynthesis. Transfers and isomerizes the ribose moiety from AdoMet to the 7-aminomethyl group of 7-deazaguanine (preQ1-tRNA) to give epoxyqueuosine (oQ-tRNA). This chain is S-adenosylmethionine:tRNA ribosyltransferase-isomerase, found in Nitrobacter winogradskyi (strain ATCC 25391 / DSM 10237 / CIP 104748 / NCIMB 11846 / Nb-255).